The primary structure comprises 275 residues: Ribosomal RNA small subunit methyltransferase A (275 aa).

6 residues coordinate S-adenosyl-L-methionine: N19, L21, G46, E71, D94, and N117.

Belongs to the class I-like SAM-binding methyltransferase superfamily. rRNA adenine N(6)-methyltransferase family. RsmA subfamily.

The protein resides in the cytoplasm. It carries out the reaction adenosine(1518)/adenosine(1519) in 16S rRNA + 4 S-adenosyl-L-methionine = N(6)-dimethyladenosine(1518)/N(6)-dimethyladenosine(1519) in 16S rRNA + 4 S-adenosyl-L-homocysteine + 4 H(+). Its function is as follows. Specifically dimethylates two adjacent adenosines (A1518 and A1519) in the loop of a conserved hairpin near the 3'-end of 16S rRNA in the 30S particle. May play a critical role in biogenesis of 30S subunits. The polypeptide is Ribosomal RNA small subunit methyltransferase A (Burkholderia multivorans (strain ATCC 17616 / 249)).